Reading from the N-terminus, the 999-residue chain is MDKKWSLEQRWLHLLNQQFLDCLNHLFNHYRRLSTFQKPPSIIRHMFSVLALAIQILANVNVVAQTTEAVDLAPPPKVRQIRIPGDILIGGVFPVHSKSLNGDEPCGEIAETRGVHRVEAMLYALDQINSQNDFLRGYKLGALILDSCSNPAYALNQSLDFVRDMIGSSEASDYVCLDGSDPNLKKQSQKKNVAAVVGGSYSSVSVQLANLLRLFRIAQVSPASTNADLSDKNRFEYFARTVPSDDYQAMAMVEIAVKFKWSYVSLVYSADEYGELGADAFKKEARKKGICIALEERIQNKKESFTESINNLVQKLQPEKNVGATVVVLFVGTEYIPDILRYTAERMKLTSGAKKRIIWLASESWDRNNDKYTAGDNRLAAQGAIVLMLASQKVPSFEEYFMSLHPGTEAFERNKWLRELWQVKYKCEFDTPPGSTASRCEDIKQSTEGFNADDKVQFVIDAVYAIAHGLQSMKQAICPDDAIENHWISRYSKQPEICHAMQNIDGSDFYQNYLLKVNFTGKTISIFSSFRLSPFSDIVGKRFRFSPQGDGPASYTILTYKPKSMDKKRRMTDDESSPSDYVEIGHWSENNLTIYEKNLWWDPDHTPVSVCSLPCKIGFRKQLIKDEQCCWACSKCEDYEYLINETHCVGCEQGWWPTKDRKGCFDLSLSQLKYMRWRSMYSLVPTILAVFGIIATLFVIVVYVIYNETPVVKASGRELSYILLISMIMCYCMTFVLLSKPSAIVCAIKRTGIGFAFSCLYSAMFVKTNRIFRIFSTRSAQRPRFISPISQVVMTAMLAGVQLIGSLIWLSVVPPGWRHHYPTRDQVVLTCNVPDHHFLYSLAYDGFLIVLCTTYAVKTRKVPENFNETKFIGFSMYTTCVVWLSWIFFFFGTGSDFQIQTSSLCISISMSANVALACIFSPKLWIILFEKHKNVRKQEGESMLNKSSRSLGNCSSRLCANSIDEPNQYTALLTDSTRRRSSRKTSQPTSTSSAHDTFL.

Residues Ser202, 223 to 225 (AST), Tyr273, Glu363, and Lys455 each bind L-glutamate. A glycan (N-linked (GlcNAc...) asparagine) is linked at Asn518. 7 consecutive transmembrane segments (helical) span residues 682–704 (SLVP…VVYV), 719–739 (LSYI…VLLS), 751–769 (TGIG…VKTN), 792–812 (VVMT…WLSV), 836–857 (HHFL…TYAV), 871–893 (FIGF…FFGT), and 904–929 (LCIS…IILF). Residues 975 to 999 (DSTRRRSSRKTSQPTSTSSAHDTFL) are disordered. Residues 984–993 (KTSQPTSTSS) show a composition bias toward low complexity.

It belongs to the G-protein coupled receptor 3 family.

The protein localises to the cell membrane. In terms of biological role, G-protein coupled receptor for glutamate. Ligand binding causes a conformation change that triggers signaling via guanine nucleotide-binding proteins (G proteins) and modulates the activity of down-stream effectors. The chain is Probable metabotropic glutamate receptor mgl-1 (mgl-1) from Caenorhabditis elegans.